Consider the following 1081-residue polypeptide: MPKRTDIKTILIIGAGPIIIGQACEFDYSGAQACKALREEGFKVVLVNSNPATIMTDPSTADVTYIEPITWEVVERIIAKERPDAILPTMGGQTALNCALDLHRHGVLEKYNVELIGASPEAIDKAEDRQKFKEAMTKIGLGSAKSGIAHSLEEALAVQAQIARETSSGGYPIVIRPSFTLGGTGGGIAYNREEFEDICKRGLDLSPTNELLIEESLLGWKEYEMEVVRDKKDNCIIVCSIENLDPMGIHTGDSITVAPAQTLTDKEYQILRNASLAVLREIGVDTGGSNVQFSINPEDGRMIVIEMNPRVSRSSALASKATGFPIAKVAAKLAVGYTLDELKNEITGGATPASFEPSIDYVVTKVPRFAFEKFPQADSHLTTQMKSVGEVMAMGRTFQESFQKALRGLEVGVDGLDEKSSDRDEIIAEIGEPGPDRIWYLGDAFRLGLSIDEVYAETAVDPWFLAQIEDIVRTEALVKARTLDSLSAAELRLLKQKGFSDRRLATLMKTTAQAVREKRIAEKVRPVYKRVDTCAAEFATNTAYLYSTYEAEHGECEADPTERKKIMVLGGGPNRIGQGIEFDYCCVHAALALREDGYETIMVNCNPETVSTDYDTSDRLYFEPVTLEDVLEIVDKEKPVGVIVQYGGQTPLKLALDLEANGVPIIGTTPDMIDAAEDRERFQKLLHDLGLRQPPNRTARAEDEALKLADEIGYPLVVRPSYVLGGRAMEIVHEPRDLERYMREAVKVSNDSPVLLDRFLNDAIECDVDCLSDGKRVFIGGVMEHIEQAGVHSGDSACSLPPYSLSQATVDELKRQTAAMARALNVIGLMNVQFAIQQKGGEDIVYVLEVNPRASRTVPYVSKATGISLAKVAARCMAGQSLDEQGIHDEVVPSYYSVKEAVFPFNKFPGVDPVLGPEMRSTGEVMGVGRTFGEALFKSQLAAGSRLPEKGTVLMTVKDSDKPRAIEVARTLHTLGYPIVATRGTASAIEAAGIPVRVVNKVKDGRPHIVDMIKNGELALVFTTVDETRAAIADSRSIRTAALANRVTYYTTIAGARAAVEGLKHLQNLDVYDLQGLHASL.

The tract at residues 1–410 (MPKRTDIKTI…SFQKALRGLE (410 aa)) is carboxyphosphate synthetic domain. ATP contacts are provided by Arg-129, Arg-176, Gly-182, Gly-183, Glu-215, Leu-217, Glu-222, Gly-248, Ile-249, His-250, Gln-292, and Glu-306. Residues 133–335 (KEAMTKIGLG…IAKVAAKLAV (203 aa)) form the ATP-grasp 1 domain. Mg(2+) is bound by residues Gln-292, Glu-306, and Asn-308. Positions 292, 306, and 308 each coordinate Mn(2+). The segment at 411–558 (VGVDGLDEKS…YEAEHGECEA (148 aa)) is oligomerization domain. The segment at 559–944 (DPTERKKIMV…ALFKSQLAAG (386 aa)) is carbamoyl phosphate synthetic domain. Positions 683 to 878 (QKLLHDLGLR…LAKVAARCMA (196 aa)) constitute an ATP-grasp 2 domain. ATP is bound by residues Arg-719, Arg-758, Leu-760, Glu-765, Gly-790, Val-791, His-792, Ser-793, Gln-833, and Glu-849. Residues Gln-833, Glu-849, and Asn-851 each coordinate Mg(2+). 3 residues coordinate Mn(2+): Gln-833, Glu-849, and Asn-851. The region spanning 945 to 1081 (SRLPEKGTVL…YDLQGLHASL (137 aa)) is the MGS-like domain. Residues 945-1081 (SRLPEKGTVL…YDLQGLHASL (137 aa)) are allosteric domain.

This sequence belongs to the CarB family. As to quaternary structure, composed of two chains; the small (or glutamine) chain promotes the hydrolysis of glutamine to ammonia, which is used by the large (or ammonia) chain to synthesize carbamoyl phosphate. Tetramer of heterodimers (alpha,beta)4. It depends on Mg(2+) as a cofactor. Requires Mn(2+) as cofactor.

The catalysed reaction is hydrogencarbonate + L-glutamine + 2 ATP + H2O = carbamoyl phosphate + L-glutamate + 2 ADP + phosphate + 2 H(+). It catalyses the reaction hydrogencarbonate + NH4(+) + 2 ATP = carbamoyl phosphate + 2 ADP + phosphate + 2 H(+). It participates in amino-acid biosynthesis; L-arginine biosynthesis; carbamoyl phosphate from bicarbonate: step 1/1. It functions in the pathway pyrimidine metabolism; UMP biosynthesis via de novo pathway; (S)-dihydroorotate from bicarbonate: step 1/3. Functionally, large subunit of the glutamine-dependent carbamoyl phosphate synthetase (CPSase). CPSase catalyzes the formation of carbamoyl phosphate from the ammonia moiety of glutamine, carbonate, and phosphate donated by ATP, constituting the first step of 2 biosynthetic pathways, one leading to arginine and/or urea and the other to pyrimidine nucleotides. The large subunit (synthetase) binds the substrates ammonia (free or transferred from glutamine from the small subunit), hydrogencarbonate and ATP and carries out an ATP-coupled ligase reaction, activating hydrogencarbonate by forming carboxy phosphate which reacts with ammonia to form carbamoyl phosphate. In Ralstonia nicotianae (strain ATCC BAA-1114 / GMI1000) (Ralstonia solanacearum), this protein is Carbamoyl phosphate synthase large chain.